Consider the following 544-residue polypeptide: Putative cysteine ligase BshC (544 aa).

A coiled-coil region spans residues 431–463; sequence LNDTCRTIKEEHEKFIQELSRLDEKIYDFEEKN.

The protein belongs to the BshC family.

Functionally, involved in bacillithiol (BSH) biosynthesis. May catalyze the last step of the pathway, the addition of cysteine to glucosamine malate (GlcN-Mal) to generate BSH. The polypeptide is Putative cysteine ligase BshC (Natranaerobius thermophilus (strain ATCC BAA-1301 / DSM 18059 / JW/NM-WN-LF)).